The following is a 282-amino-acid chain: Dihydropteroate synthase (282 aa).

In terms of domain architecture, Pterin-binding spans 15-267 (PHVMGILNVT…DVKETVEAMR (253 aa)). A Mg(2+)-binding site is contributed by Asn22. Residues Thr62, Asp96, Asn115, Asp185, Lys221, and 255-257 (RVH) each bind (7,8-dihydropterin-6-yl)methyl diphosphate.

It belongs to the DHPS family. As to quaternary structure, homodimer. Mg(2+) serves as cofactor.

The enzyme catalyses (7,8-dihydropterin-6-yl)methyl diphosphate + 4-aminobenzoate = 7,8-dihydropteroate + diphosphate. It functions in the pathway cofactor biosynthesis; tetrahydrofolate biosynthesis; 7,8-dihydrofolate from 2-amino-4-hydroxy-6-hydroxymethyl-7,8-dihydropteridine diphosphate and 4-aminobenzoate: step 1/2. Functionally, catalyzes the condensation of para-aminobenzoate (pABA) with 6-hydroxymethyl-7,8-dihydropterin diphosphate (DHPt-PP) to form 7,8-dihydropteroate (H2Pte), the immediate precursor of folate derivatives. The polypeptide is Dihydropteroate synthase (folP) (Shigella flexneri).